The chain runs to 448 residues: Tubulin beta chain (448 aa).

Residues Q11, E69, S138, G142, T143, G144, N204, and N226 each coordinate GTP. Residue E69 coordinates Mg(2+). Residues 426-448 (QDAGIDEEEEEYEEEAPVDEPLE) form a disordered region. Residues 429-448 (GIDEEEEEYEEEAPVDEPLE) are compositionally biased toward acidic residues.

Belongs to the tubulin family. As to quaternary structure, dimer of alpha and beta chains. A typical microtubule is a hollow water-filled tube with an outer diameter of 25 nm and an inner diameter of 15 nM. Alpha-beta heterodimers associate head-to-tail to form protofilaments running lengthwise along the microtubule wall with the beta-tubulin subunit facing the microtubule plus end conferring a structural polarity. Microtubules usually have 13 protofilaments but different protofilament numbers can be found in some organisms and specialized cells. Mg(2+) serves as cofactor.

It is found in the cytoplasm. Its subcellular location is the cytoskeleton. Its function is as follows. Tubulin is the major constituent of microtubules, a cylinder consisting of laterally associated linear protofilaments composed of alpha- and beta-tubulin heterodimers. Microtubules grow by the addition of GTP-tubulin dimers to the microtubule end, where a stabilizing cap forms. Below the cap, tubulin dimers are in GDP-bound state, owing to GTPase activity of alpha-tubulin. The protein is Tubulin beta chain (TUB2) of Epichloe coenophiala (Tall fescue endophyte fungus).